We begin with the raw amino-acid sequence, 504 residues long: Anaerobic nitric oxide reductase transcription regulator NorR (504 aa).

The residue at position 57 (Asp-57) is a 4-aspartylphosphate. Positions 187–416 (MIGLSPGMTQ…LEHAIHRAVV (230 aa)) constitute a Sigma-54 factor interaction domain. ATP contacts are provided by residues 215 to 222 (GETGTGKE) and 278 to 287 (ADNGTLFLDE). Residues 479-498 (WAASARMLETDVANLHRLAK) constitute a DNA-binding region (H-T-H motif).

The protein operates within nitrogen metabolism; nitric oxide reduction. Required for the expression of anaerobic nitric oxide (NO) reductase, acts as a transcriptional activator for at least the norVW operon. Activation also requires sigma-54. The chain is Anaerobic nitric oxide reductase transcription regulator NorR from Escherichia coli (strain SMS-3-5 / SECEC).